A 197-amino-acid chain; its full sequence is dITP/XTP pyrophosphatase (197 aa).

Substrate is bound at residue 8 to 13; it reads TGNPGK. Mg(2+) contacts are provided by E40 and D69. The active-site Proton acceptor is the D69. Substrate-binding positions include S70, 154–157, K177, and 182–183; these read FGYD and HR.

This sequence belongs to the HAM1 NTPase family. Homodimer. It depends on Mg(2+) as a cofactor.

It carries out the reaction XTP + H2O = XMP + diphosphate + H(+). The enzyme catalyses dITP + H2O = dIMP + diphosphate + H(+). It catalyses the reaction ITP + H2O = IMP + diphosphate + H(+). Pyrophosphatase that catalyzes the hydrolysis of nucleoside triphosphates to their monophosphate derivatives, with a high preference for the non-canonical purine nucleotides XTP (xanthosine triphosphate), dITP (deoxyinosine triphosphate) and ITP. Seems to function as a house-cleaning enzyme that removes non-canonical purine nucleotides from the nucleotide pool, thus preventing their incorporation into DNA/RNA and avoiding chromosomal lesions. This is dITP/XTP pyrophosphatase from Yersinia pestis.